The primary structure comprises 314 residues: Methionyl-tRNA formyltransferase (314 aa).

Residue 111–114 (SLLP) coordinates (6S)-5,6,7,8-tetrahydrofolate.

This sequence belongs to the Fmt family.

The catalysed reaction is L-methionyl-tRNA(fMet) + (6R)-10-formyltetrahydrofolate = N-formyl-L-methionyl-tRNA(fMet) + (6S)-5,6,7,8-tetrahydrofolate + H(+). Attaches a formyl group to the free amino group of methionyl-tRNA(fMet). The formyl group appears to play a dual role in the initiator identity of N-formylmethionyl-tRNA by promoting its recognition by IF2 and preventing the misappropriation of this tRNA by the elongation apparatus. In Coxiella burnetii (strain CbuG_Q212) (Coxiella burnetii (strain Q212)), this protein is Methionyl-tRNA formyltransferase.